Reading from the N-terminus, the 366-residue chain is G-protein coupled receptor 183-B (366 aa).

The Extracellular portion of the chain corresponds to 1–24 (MMSPDLDLNFSSNCNLYDHRPVAR). The N-linked (GlcNAc...) asparagine glycan is linked to Asn9. Residues 25-50 (VLIPLVYSIICPVGLLGNALALHVVI) form a helical membrane-spanning segment. Residues 51 to 70 (SSTTKINSITLYSANLAVSD) lie on the Cytoplasmic side of the membrane. Residues 71 to 88 (ILFCLSLPLRAVYYGLGF) form a helical membrane-spanning segment. Residues 89–98 (HWPMGEVLCK) are Extracellular-facing. A disulfide bridge connects residues Cys97 and Cys175. A helical membrane pass occupies residues 99 to 120 (AIALLFYLNCYAGVNFMTCLAV). At 121-142 (DRFVALVFPARLAKLRKAKNVR) the chain is on the cytoplasmic side. The chain crosses the membrane as a helical span at residues 143 to 161 (FVCLAIWLLVLAQTLPLLT). The Extracellular portion of the chain corresponds to 162-187 (IGLTKTEPDSSITCMEYPNFEGVFKG). Residues 188–210 (LPYMLIVAVVLGFGIPVMTIIAC) traverse the membrane as a helical segment. Topologically, residues 211-236 (YSILTHKLHQAAKSNQLTERSGKTKK) are cytoplasmic. The chain crosses the membrane as a helical span at residues 237–260 (ARGVIAGVVFVFVVCFSPYHIDIL). Residues 261–280 (QYMIRKLLYETDCKELQSFQ) lie on the Extracellular side of the membrane. Residues 281–305 (ISLHITVCLMNLNSCLDPFVYFFAC) form a helical membrane-spanning segment. Over 306–366 (KGYKQKVMRM…QQICYQPSAT (61 aa)) the chain is Cytoplasmic.

The protein belongs to the G-protein coupled receptor 1 family.

Its subcellular location is the cell membrane. Probable receptor for oxysterols that plays a central role during humoral immunity. Promotes activated B-cell localization in the outer follicle and interfollicular regions. This chain is G-protein coupled receptor 183-B (gpr183b), found in Danio rerio (Zebrafish).